A 151-amino-acid polypeptide reads, in one-letter code: MSKITKKVEELVKPILERYGFDLVDIEFKKEGKSHFLRVYIDKPGGITIDDCQLVSEELSEKLDIVDPIPFSYYLEVSSPGVDRPLVTDRDFIRNKGKVVDVFLNQPFLNRTRITGELVEKNEKSLILIVDKEKIVIPIENIKKVKLAIRF.

Belongs to the RimP family.

The protein localises to the cytoplasm. Its function is as follows. Required for maturation of 30S ribosomal subunits. In Caldicellulosiruptor bescii (strain ATCC BAA-1888 / DSM 6725 / KCTC 15123 / Z-1320) (Anaerocellum thermophilum), this protein is Ribosome maturation factor RimP.